The primary structure comprises 584 residues: MFNLFILLLERVGLIIIIAYMLMNINHFKTMMGEREKLRSQWQLTILFALFAITSNFTGIEIENGHIVSSNIYYQLNDDASMANTRVLTIGMSGLIGGPFVAIIVGIVSGLSRLYIGGANAYTYLISSIFIALISGFYGYRTMRRYTYPTVLMGAIIGALNEAIQMACILIFANDTASAWSLVQFIALPMILINSIGTAIFLSIILSTLKQEEQTRAIQTHDVFEIANKTLPYFRSGLTEQSARSVAEIILKLMNVSAVAITNRTDILTHVGAASDHHVAKKAIITDLSKEVIKTGHLKEAHSKEEIGCNNPNCSLTSAIVIPLMINQEVAGTLKFYFTNEYENTTSTKQLARGLADIFSSQLELGQAEMQSKLLKDAEIKSLQAQVNPHFFFNSINTISALVRIDSEKARKLLLQLSQFFRSNLQGARNNTITLGKELQQVEAYLALEQARFPDRFTIQYHIDSSCKHVLIPPFVIQILVENAIKHAFKHRRKDNIIDVVAHHDNEELTLTVRDNGSGIDDDKLPLIGQMSVDSETGTGSALENLNRRLIGLYGTKAALHFESTEIGTTVSCHIPSHTIKEDI.

The next 6 helical transmembrane spans lie at 2-22 (FNLF…AYML), 42-62 (WQLT…GIEI), 87-107 (VLTI…IVGI), 114-134 (LYIG…IALI), 152-172 (LMGA…ILIF), and 185-205 (FIAL…LSII). A Histidine kinase domain is found at 379-461 (EIKSLQAQVN…RFPDRFTIQY (83 aa)). Histidine 390 carries the post-translational modification Phosphohistidine; by autocatalysis.

The protein localises to the cell membrane. It carries out the reaction ATP + protein L-histidine = ADP + protein N-phospho-L-histidine.. Functionally, member of the two-component regulatory system LytR/LytS that probably regulates genes involved in cell wall metabolism. The chain is Sensor protein LytS (lytS) from Staphylococcus haemolyticus (strain JCSC1435).